A 724-amino-acid polypeptide reads, in one-letter code: Phenylalanine ammonia-lyase (724 aa).

Y91 acts as the Proton donor/acceptor in catalysis. Positions 205-207 form a cross-link, 5-imidazolinone (Ala-Gly); the sequence is ASG. S206 carries the post-translational modification 2,3-didehydroalanine (Ser). (E)-cinnamate is bound by residues N265, Q357, R363, N393, K467, E495, and N498.

This sequence belongs to the PAL/histidase family. Homotetramer. In terms of processing, contains an active site 4-methylidene-imidazol-5-one (MIO), which is formed autocatalytically by cyclization and dehydration of residues Ala-Ser-Gly.

It is found in the cytoplasm. The catalysed reaction is L-phenylalanine = (E)-cinnamate + NH4(+). Its pathway is phenylpropanoid metabolism; trans-cinnamate biosynthesis; trans-cinnamate from L-phenylalanine: step 1/1. Catalyzes the non-oxidative deamination of L-phenylalanine to form trans-cinnamic acid and a free ammonium ion. Facilitates the commitment step in phenylpropanoid pathways that produce secondary metabolites such as lignins, coumarins and flavonoids. This chain is Phenylalanine ammonia-lyase (PAL1), found in Mycosarcoma maydis (Corn smut fungus).